The primary structure comprises 383 residues: MPHPSSRQAHLVLADGTVLTGDAFGHRGSVVGEVVFNTGMTGYQEVLTDPSYAGQLVTFTYPELGNTGVNGDDQEADHPHARGVIARQLAPCASNWRCSESLDNWMERHGLVGICGVDTRALVRRLRDGGAINGVISSDGRSPADLLAEVRHAPSMEGLNLASQVSTTEPYEWSSPCRVGFDQRLKQHPDLPYRVVAIDFGIKRAILDRLVAHGCAVTVLPSDADLDTVMSHQPEGVFLSNGPGDPAAVDSGIDLARSLLERANLPLFGICLGHQILGLALGGKTFKLGYGHRGLNHPCGTSGQVEITSQNHGFAISADSLPEPMVEVTHLNLNDRTVAAFQHRHQPVFGIQYHPEASPGPHDADHHFGRFVALMADRRDVGG.

The segment at 1 to 190 is CPSase; the sequence is MPHPSSRQAH…FDQRLKQHPD (190 aa). Residues Ser-51, Gly-242, and Gly-244 each coordinate L-glutamine. The Glutamine amidotransferase type-1 domain occupies 194–381; sequence RVVAIDFGIK…VALMADRRDV (188 aa). Cys-271 functions as the Nucleophile in the catalytic mechanism. Residues Leu-272, Gln-275, Asn-311, Gly-313, and Phe-314 each contribute to the L-glutamine site. Catalysis depends on residues His-354 and Glu-356.

Belongs to the CarA family. As to quaternary structure, composed of two chains; the small (or glutamine) chain promotes the hydrolysis of glutamine to ammonia, which is used by the large (or ammonia) chain to synthesize carbamoyl phosphate. Tetramer of heterodimers (alpha,beta)4.

It catalyses the reaction hydrogencarbonate + L-glutamine + 2 ATP + H2O = carbamoyl phosphate + L-glutamate + 2 ADP + phosphate + 2 H(+). It carries out the reaction L-glutamine + H2O = L-glutamate + NH4(+). It functions in the pathway amino-acid biosynthesis; L-arginine biosynthesis; carbamoyl phosphate from bicarbonate: step 1/1. It participates in pyrimidine metabolism; UMP biosynthesis via de novo pathway; (S)-dihydroorotate from bicarbonate: step 1/3. In terms of biological role, small subunit of the glutamine-dependent carbamoyl phosphate synthetase (CPSase). CPSase catalyzes the formation of carbamoyl phosphate from the ammonia moiety of glutamine, carbonate, and phosphate donated by ATP, constituting the first step of 2 biosynthetic pathways, one leading to arginine and/or urea and the other to pyrimidine nucleotides. The small subunit (glutamine amidotransferase) binds and cleaves glutamine to supply the large subunit with the substrate ammonia. The protein is Carbamoyl phosphate synthase small chain of Parasynechococcus marenigrum (strain WH8102).